The following is a 351-amino-acid chain: High-affinity nickel transport protein (351 aa).

Over 1 to 19 (MFQLLAGVRMNSTGRPRAK) the chain is Cytoplasmic. A helical transmembrane segment spans residues 20–40 (IILLYALLIAFNIGAWLCALA). The Periplasmic portion of the chain corresponds to 41–51 (AFRDHPVLLGT). The chain crosses the membrane as a helical span at residues 52-72 (ALLAYGLGLRHAVDADHLAAI). The Cytoplasmic segment spans residues 73–94 (DNVTRKLMQDGRRPITAGLWFS). Residues 95-115 (LGHSSVVVLASVLIAVMATTL) traverse the membrane as a helical segment. The Periplasmic segment spans residues 116 to 128 (QERLDAFHEVGSV). Residues 129–149 (IGTLASALFLFAIAAINLVIL) traverse the membrane as a helical segment. The Cytoplasmic portion of the chain corresponds to 150-199 (RSAYRAFRRVRRGGIYVEEDFDLLFGNRGFLARIFRPLFRFITRSWHMYP). The helical transmembrane segment at 200–220 (LGMLFALGFDTATEVALLGIS) threads the bilayer. The Periplasmic portion of the chain corresponds to 221–243 (TMEASRGVPIWSILVFPALFTAG). The chain crosses the membrane as a helical span at residues 244–264 (MALIDTIDSILMCGAYAWAYA). Topologically, residues 265 to 269 (KPVRK) are cytoplasmic. A helical membrane pass occupies residues 270–290 (LYYNMTITFVSAIVALIVGGI). The Periplasmic segment spans residues 291–316 (ETLGLLADKFMLKGVFWNAVGALNEN). A helical transmembrane segment spans residues 317 to 337 (FCQLGFVIIGIFTVCWVVSIV). The Cytoplasmic segment spans residues 338–351 (VYRLRRYDDSEVRA).

This sequence belongs to the NiCoT transporter (TC 2.A.52) family.

The protein resides in the cell inner membrane. Functionally, high-affinity nickel transporter responsible for nickel uptake. Necessary for high levels of activity of hydrogenase and urease. Does not transport cobalt. This is High-affinity nickel transport protein (hoxN) from Cupriavidus necator (strain ATCC 17699 / DSM 428 / KCTC 22496 / NCIMB 10442 / H16 / Stanier 337) (Ralstonia eutropha).